The sequence spans 245 residues: 2,3,4,5-tetrahydropyridine-2,6-dicarboxylate N-acetyltransferase (245 aa).

It belongs to the transferase hexapeptide repeat family. DapH subfamily.

The enzyme catalyses (S)-2,3,4,5-tetrahydrodipicolinate + acetyl-CoA + H2O = L-2-acetamido-6-oxoheptanedioate + CoA. It functions in the pathway amino-acid biosynthesis; L-lysine biosynthesis via DAP pathway; LL-2,6-diaminopimelate from (S)-tetrahydrodipicolinate (acetylase route): step 1/3. Functionally, catalyzes the transfer of an acetyl group from acetyl-CoA to tetrahydrodipicolinate. This Methanopyrus kandleri (strain AV19 / DSM 6324 / JCM 9639 / NBRC 100938) protein is 2,3,4,5-tetrahydropyridine-2,6-dicarboxylate N-acetyltransferase.